A 114-amino-acid polypeptide reads, in one-letter code: uncharacterized protein (114 aa).

Disordered stretches follow at residues 26–45 (GMKQKRKPASSEPTPEDALG) and 72–98 (PKGSEPPGRSAGLQGATERSGRPSVQA).

This is an uncharacterized protein from Homo sapiens (Human).